Here is a 987-residue protein sequence, read N- to C-terminus: Ephrin type-B receptor 4a (987 aa).

The first 24 residues, 1–24 (MELFSRNVAAFWIILLEFLLGSVA), serve as a signal peptide directing secretion. At 25 to 548 (EEEVLMNTKT…DSSSPLLVTG (524 aa)) the chain is on the extracellular side. The region spanning 26–205 (EEVLMNTKTE…FFKKCPALTR (180 aa)) is the Eph LBD domain. 2 disulfides stabilise this stretch: cysteine 70/cysteine 187 and cysteine 104/cysteine 114. Residues 319 to 340 (DSADTPCTRPPSSPRSPVPQVN) are disordered. A compositionally biased stretch (pro residues) spans 326-335 (TRPPSSPRSP). Fibronectin type-III domains are found at residues 328–438 (PPSS…TSPN) and 442–536 (LVSG…TLPD). The chain crosses the membrane as a helical span at residues 549–569 (ILIAMGMLLLIIVIGAAIYCI). At 570–987 (RKQNNYKDPE…QNKAPGNVLY (418 aa)) the chain is on the cytoplasmic side. The Protein kinase domain maps to 621–884 (VKIEEVIGAG…NIVSALDKLI (264 aa)). ATP contacts are provided by residues 627-635 (IGAGEFGEV) and lysine 653. Aspartate 746 acts as the Proton acceptor in catalysis. The SAM domain occupies 914–978 (SSCGTVGDWL…LSSIEALGIQ (65 aa)).

It belongs to the protein kinase superfamily. Tyr protein kinase family. Ephrin receptor subfamily.

The protein localises to the cell membrane. The enzyme catalyses L-tyrosyl-[protein] + ATP = O-phospho-L-tyrosyl-[protein] + ADP + H(+). Its function is as follows. Receptor tyrosine kinase which binds promiscuously transmembrane ephrin-B family ligands residing on adjacent cells, leading to contact-dependent bidirectional signaling into neighboring cells. The signaling pathway downstream of the receptor is referred to as forward signaling while the signaling pathway downstream of the ephrin ligand is referred to as reverse signaling. Together with its cognate ligand/functional ligand EFNB2 is involved in the regulation of cell adhesion and cell migration, and plays a central role in heart morphogenesis, angiogenesis and blood vessel remodeling and permeability. EPHB4-mediated forward signaling controls cellular repulsion and segregation from EFNB2-expressing cells. Involved in somitogenesis. This is Ephrin type-B receptor 4a from Danio rerio (Zebrafish).